The sequence spans 345 residues: N-acetyl-gamma-glutamyl-phosphate reductase (345 aa).

Cys-142 is a catalytic residue.

The protein belongs to the NAGSA dehydrogenase family. Type 1 subfamily.

It localises to the cytoplasm. It carries out the reaction N-acetyl-L-glutamate 5-semialdehyde + phosphate + NADP(+) = N-acetyl-L-glutamyl 5-phosphate + NADPH + H(+). The protein operates within amino-acid biosynthesis; L-arginine biosynthesis; N(2)-acetyl-L-ornithine from L-glutamate: step 3/4. Functionally, catalyzes the NADPH-dependent reduction of N-acetyl-5-glutamyl phosphate to yield N-acetyl-L-glutamate 5-semialdehyde. The polypeptide is N-acetyl-gamma-glutamyl-phosphate reductase (Thermus thermophilus (strain ATCC BAA-163 / DSM 7039 / HB27)).